Here is an 815-residue protein sequence, read N- to C-terminus: BTB/POZ domain-containing protein KCTD3 (815 aa).

Residues 18–87 enclose the BTB domain; that stretch reads EIVQLNVGGT…LRTKELDLRG (70 aa). The span at 139–168 shows a compositional bias: polar residues; the sequence is INNTVRSADSRNGLNSTEGEARGNGTQPVL. The segment at 139–170 is disordered; it reads INNTVRSADSRNGLNSTEGEARGNGTQPVLSG. WD repeat units lie at residues 174–218, 224–263, 270–305, 310–342, 354–404, 412–449, 457–504, and 510–569; these read ETVR…GWQQ, YLDW…LWSV, SEIG…VWNA, WQVQ…YIDM, LLVT…VQHP, QLFQ…TWTV, STQP…IQKV, and KLFV…MWDL. The interval 512–815 is interaction with HCN3; the sequence is FVRLSSTGKR…SDSSGQEYSL (304 aa). A phosphoserine mark is found at Ser604, Ser664, and Ser711. The span at 736 to 758 shows a compositional bias: basic and acidic residues; the sequence is SESKKRSSEDENENKIEFRKKGG. The segment at 736-815 is disordered; that stretch reads SESKKRSSED…SDSSGQEYSL (80 aa). Residues 774 to 800 show a composition bias toward low complexity; sequence ASSPSTSDGGTDSPGTASPSPTKTTPS. Phosphoserine is present on Ser793.

The protein belongs to the KCTD3 family. Interacts with HCN3. In terms of tissue distribution, broadly expressed in normal tissues.

It is found in the cell membrane. Functionally, accessory subunit of potassium/sodium hyperpolarization-activated cyclic nucleotide-gated channel 3 (HCN3) up-regulating its cell-surface expression and current density without affecting its voltage dependence and kinetics. This chain is BTB/POZ domain-containing protein KCTD3 (KCTD3), found in Homo sapiens (Human).